We begin with the raw amino-acid sequence, 334 residues long: Leucine-rich repeat-containing protein 39 (334 aa).

10 LRR repeats span residues 59 to 82, 83 to 105, 106 to 128, 129 to 151, 153 to 175, 176 to 198, 199 to 221, 223 to 244, 245 to 269, and 272 to 295; these read EDGR…LLKL, NQLQ…IGRF, QHLI…IGLL, TRLQ…LSNC, SLEK…LSKL, LKLT…VLDM, PALE…LDRM, SLHT…IRNM, KNLG…EMTS, and FVNF…VDGE.

In terms of assembly, interacts with MYH7 (via C-terminus). As to expression, expressed in heart and skeletal muscle (at protein level). Also detected in kidney (at protein level). Not detected in other tissues tested (at protein level).

The protein resides in the cytoplasm. It localises to the myofibril. Its subcellular location is the sarcomere. The protein localises to the m line. Component of the sarcomeric M-band which plays a role in myocyte response to biomechanical stress. May regulate expression of other M-band proteins via an SRF-dependent pathway. Important for normal contractile function in heart. This is Leucine-rich repeat-containing protein 39 from Rattus norvegicus (Rat).